Here is a 394-residue protein sequence, read N- to C-terminus: Proliferation-associated protein 2G4 (394 aa).

S2 bears the N-acetylserine mark. The residue at position 2 (S2) is a Phosphoserine. The segment at 2 to 48 (SGEDEQQEQTIAEDLVVTKYKMGGDIANRVLRSLVEASSSGVSVLSL) is necessary for nucleolar localization. Residues 46-54 (LSLCEKGDA) are RNA-binding. A Glycyl lysine isopeptide (Lys-Gly) (interchain with G-Cter in SUMO2) cross-link involves residue K298. The necessary for nucleolar localization stretch occupies residues 301 to 394 (LLQPFNVLYE…ETLEENGAGD (94 aa)). Phosphoserine is present on S335. Residues 358–394 (LQSSASRKTQKKKKKKASKTAENATSGETLEENGAGD) form a disordered region. S361 bears the Phosphoserine; by PKC/PRKCD mark. The tract at residues 361–375 (SASRKTQKKKKKKAS) is interaction with RNA. The segment covering 365–375 (KTQKKKKKKAS) has biased composition (basic residues). Residues T366 and T386 each carry the phosphothreonine modification.

The protein belongs to the peptidase M24 family. In terms of assembly, isoform 2 interacts with the cytoplasmic domain of non-phosphorylated ERBB3; the interaction requires PKC activity. Interacts with AR. Treatment with HRG leads to dissociation from ERBB3 and increases association with AR. Interacts with nucleolin/NCL. Component of a ribonucleoprotein complex containing at least PA2G4, NCL, TOP1, PABPC2, RPLP0, acetylated histone H1 (HIST1H1A or H1F1), histone H1 2/4, RPL4, RPL8, RPL15, RPL18, RPL18A, RPL21, RPL11, RPL12, RPL28, RPL27, RPLP2 and RPL24. Interacts with HDAC2. Interacts with RB1; the interaction is enhanced upon PA2G4 dephosphorylation. Isoform 1 and isoform 2 interact with RNF20. Isoform 2 interacts with HUWE1. Interacts with AKT1. Interacts with DNAJC21. In terms of processing, phosphorylated on serine and threonine residues. Phosphorylation is enhanced by HRG treatment. Basal phosphorylation is PKC-dependent and HRG-induced phosphorylation is predominantly PKC-independent. Phosphorylation at Ser-361 by PKC/PRKCD regulates its nucleolar localization. Isoform 2 is polyubiquitinated, leading to proteasomal degradation and phosphorylation by PKC/PRKCD enhances polyubiquitination.

Its subcellular location is the cytoplasm. It is found in the nucleus. The protein resides in the nucleolus. Functionally, may play a role in a ERBB3-regulated signal transduction pathway. Seems be involved in growth regulation. Acts a corepressor of the androgen receptor (AR) and is regulated by the ERBB3 ligand neuregulin-1/heregulin (HRG). Inhibits transcription of some E2F1-regulated promoters, probably by recruiting histone acetylase (HAT) activity. Binds RNA. Associates with 28S, 18S and 5.8S mature rRNAs, several rRNA precursors and probably U3 small nucleolar RNA. May be involved in regulation of intermediate and late steps of rRNA processing. May be involved in ribosome assembly. Mediates cap-independent translation of specific viral IRESs (internal ribosomal entry site). Together with PTBP1 is required for the translation initiation on the foot-and-mouth disease virus (FMDV) IRES. Regulates cell proliferation, differentiation, and survival. Isoform 1 suppresses apoptosis whereas isoform 2 promotes cell differentiation. The polypeptide is Proliferation-associated protein 2G4 (Pa2g4) (Rattus norvegicus (Rat)).